The following is a 350-amino-acid chain: DNA-directed RNA polymerase subunit alpha (350 aa).

Residues 1-226 (MLISQRPTLS…ELFGLARELN (226 aa)) form an alpha N-terminal domain (alpha-NTD) region. The segment at 241–350 (ADQAAHFALP…NQDYAETEQL (110 aa)) is alpha C-terminal domain (alpha-CTD). A disordered region spans residues 328-350 (GTWNSDAGYDLEDNQDYAETEQL). Residues 336-350 (YDLEDNQDYAETEQL) show a composition bias toward acidic residues.

This sequence belongs to the RNA polymerase alpha chain family. Homodimer. The RNAP catalytic core consists of 2 alpha, 1 beta, 1 beta' and 1 omega subunit. When a sigma factor is associated with the core the holoenzyme is formed, which can initiate transcription.

It carries out the reaction RNA(n) + a ribonucleoside 5'-triphosphate = RNA(n+1) + diphosphate. Functionally, DNA-dependent RNA polymerase catalyzes the transcription of DNA into RNA using the four ribonucleoside triphosphates as substrates. In Mycolicibacterium vanbaalenii (strain DSM 7251 / JCM 13017 / BCRC 16820 / KCTC 9966 / NRRL B-24157 / PYR-1) (Mycobacterium vanbaalenii), this protein is DNA-directed RNA polymerase subunit alpha.